Reading from the N-terminus, the 150-residue chain is Large ribosomal subunit protein uL13 (150 aa).

The protein belongs to the universal ribosomal protein uL13 family. Part of the 50S ribosomal subunit.

This protein is one of the early assembly proteins of the 50S ribosomal subunit, although it is not seen to bind rRNA by itself. It is important during the early stages of 50S assembly. This is Large ribosomal subunit protein uL13 from Chlorobium phaeobacteroides (strain BS1).